Here is a 196-residue protein sequence, read N- to C-terminus: Probable malonic semialdehyde reductase RutE (196 aa).

This sequence belongs to the nitroreductase family. HadB/RutE subfamily. It depends on FMN as a cofactor.

The enzyme catalyses 3-hydroxypropanoate + NADP(+) = 3-oxopropanoate + NADPH + H(+). May reduce toxic product malonic semialdehyde to 3-hydroxypropionic acid, which is excreted. This is Probable malonic semialdehyde reductase RutE from Yersinia enterocolitica serotype O:8 / biotype 1B (strain NCTC 13174 / 8081).